We begin with the raw amino-acid sequence, 160 residues long: DNA polymerase delta subunit 4 (160 aa).

Positions 1 to 48 (MKKRTTQAKKSGQNTNIRDVFPHVVRSNSSQSHIGKKVSSEQSPTPDV) are disordered. Polar residues predominate over residues 8-17 (AKKSGQNTNI).

Belongs to the DNA polymerase delta subunit 4 family. Heterotetramer that consist of the pol3, cdc1, cdc27 and cdm1 subunits. Interacts with cdc1 and pol3.

The protein resides in the nucleus. Functionally, appears to have a role in the stabilization of the DNA polymerase delta complex. The chain is DNA polymerase delta subunit 4 (cdm1) from Schizosaccharomyces pombe (strain 972 / ATCC 24843) (Fission yeast).